A 713-amino-acid polypeptide reads, in one-letter code: Oligopeptidase PhomG (713 aa).

Zn(2+) is bound at residue histidine 461. The active site involves glutamate 462. 2 residues coordinate Zn(2+): histidine 465 and histidine 468.

This sequence belongs to the peptidase M3 family. In terms of assembly, monomer. It depends on Zn(2+) as a cofactor.

Its pathway is mycotoxin biosynthesis. In terms of biological role, oligopeptidase; part of the gene cluster that mediates the biosynthesis of the phomopsins, a group of hexapeptide mycotoxins which infects lupins and causes lupinosis disease in livestock. Within the pathway, phomG and phomG' are probably involved in the processing of the phomA and phomA' precursors. The pathway starts with the processing of the precursor phomA by several endopeptidases including kexin proteases as well as the cluster-specific S41 family peptidase phomP1 and the oligopeptidase phomG to produce 10 identical copies of the hexapeptide Tyr-Val-Ile-Pro-Ile-Asp. After being excised from the precursor peptide, the core peptides are cyclized and modified post-translationally by enzymes encoded within the gene cluster. The timing and order of proteolysis of the phomA precursor and PTMs are still unknown. Two tyrosinase-like enzymes, phomQ1 and phomQ2, catalyze the chlorination and hydroxylation of Tyr, respectively. PhomYb, is proposed to be involved in the construction of the macrocyclic structure. The other 4 ustYa family proteins may be involved in PTMs that generate the unique structure of phomopsin A. PhomYa is required for the hydroxylation of C-beta of Tyr. PhomYc, phomYd, and phomYe are responsible for the biosynthesis of 2,3-dehydroisoleucine (dIle), 2,3-dehydroaspartic acid (dAsp), and 3,4-dehydroproline (dPro), respectively. While dIle formation by phomYc is indispensable for the installation of dAsp by phomYd, the order of the other PTMs have not been elucidated yet. Most of the biosynthetic enzymes likely have broad substrate specificity, and thus, there might be a metabolic grid from a precursor to phomopsin A. The enzyme(s) responsible for the biosynthesis of 3,4-dehydrovaline (dVal) have also not been identified yet. Finally, phomM acts as an S-adenosylmethionine-dependent alpha-N-methyltransferase that catalyzes two successive N-methylation reactions, converting N-desmethyl-phomopsin A to phomopsin A and phomopsin A further to an N,N-dimethylated congener called phomopsin E. This is Oligopeptidase PhomG from Diaporthe leptostromiformis (Lupinosis disease fungus).